Consider the following 863-residue polypeptide: DNA mismatch repair protein MutS (863 aa).

617 to 624 provides a ligand contact to ATP; it reads GPNMGGKS.

It belongs to the DNA mismatch repair MutS family.

Its function is as follows. This protein is involved in the repair of mismatches in DNA. It is possible that it carries out the mismatch recognition step. This protein has a weak ATPase activity. This Pseudomonas fluorescens (strain SBW25) protein is DNA mismatch repair protein MutS.